A 352-amino-acid polypeptide reads, in one-letter code: Phosphoribosylformylglycinamidine cyclo-ligase (352 aa).

This sequence belongs to the AIR synthase family.

The protein localises to the cytoplasm. It catalyses the reaction 2-formamido-N(1)-(5-O-phospho-beta-D-ribosyl)acetamidine + ATP = 5-amino-1-(5-phospho-beta-D-ribosyl)imidazole + ADP + phosphate + H(+). The protein operates within purine metabolism; IMP biosynthesis via de novo pathway; 5-amino-1-(5-phospho-D-ribosyl)imidazole from N(2)-formyl-N(1)-(5-phospho-D-ribosyl)glycinamide: step 2/2. This chain is Phosphoribosylformylglycinamidine cyclo-ligase, found in Teredinibacter turnerae (strain ATCC 39867 / T7901).